A 164-amino-acid polypeptide reads, in one-letter code: FMN reductase (NADH) RutF (164 aa).

Belongs to the non-flavoprotein flavin reductase family. RutF subfamily.

The catalysed reaction is FMNH2 + NAD(+) = FMN + NADH + 2 H(+). In terms of biological role, catalyzes the reduction of FMN to FMNH2 which is used to reduce pyrimidine by RutA via the Rut pathway. The polypeptide is FMN reductase (NADH) RutF (Escherichia coli (strain K12 / MC4100 / BW2952)).